The following is a 284-amino-acid chain: Hypersensitive-induced response protein 1 (284 aa).

A lipid anchor (N-myristoyl glycine) is attached at Gly-2.

In terms of assembly, interacts with LRR1.

The protein resides in the cell membrane. Positive regulator of hypersensitive response (HR)-like cell death. May be involved in potassium ion channel regulation. This Oryza sativa subsp. japonica (Rice) protein is Hypersensitive-induced response protein 1.